The following is a 209-amino-acid chain: ATP-dependent Clp protease proteolytic subunit 1 (209 aa).

Ser-109 acts as the Nucleophile in catalysis. His-134 is an active-site residue.

The protein belongs to the peptidase S14 family. Fourteen ClpP subunits assemble into 2 heptameric rings which stack back to back to give a disk-like structure with a central cavity, resembling the structure of eukaryotic proteasomes.

The protein resides in the cytoplasm. It catalyses the reaction Hydrolysis of proteins to small peptides in the presence of ATP and magnesium. alpha-casein is the usual test substrate. In the absence of ATP, only oligopeptides shorter than five residues are hydrolyzed (such as succinyl-Leu-Tyr-|-NHMec, and Leu-Tyr-Leu-|-Tyr-Trp, in which cleavage of the -Tyr-|-Leu- and -Tyr-|-Trp bonds also occurs).. Functionally, cleaves peptides in various proteins in a process that requires ATP hydrolysis. Has a chymotrypsin-like activity. Plays a major role in the degradation of misfolded proteins. This chain is ATP-dependent Clp protease proteolytic subunit 1, found in Corynebacterium diphtheriae (strain ATCC 700971 / NCTC 13129 / Biotype gravis).